Reading from the N-terminus, the 390-residue chain is Probable L-tyrosine/L-aspartate decarboxylase (390 aa).

Lys-239 is modified (N6-(pyridoxal phosphate)lysine).

This sequence belongs to the group II decarboxylase family. MfnA subfamily. Pyridoxal 5'-phosphate is required as a cofactor.

The catalysed reaction is L-tyrosine + H(+) = tyramine + CO2. It carries out the reaction L-aspartate + H(+) = beta-alanine + CO2. It participates in cofactor biosynthesis; methanofuran biosynthesis. It functions in the pathway cofactor biosynthesis; coenzyme A biosynthesis. Catalyzes the decarboxylation of L-tyrosine to produce tyramine for methanofuran biosynthesis. Can also catalyze the decarboxylation of L-aspartate to produce beta-alanine for coenzyme A (CoA) biosynthesis. This Methanococcus aeolicus (strain ATCC BAA-1280 / DSM 17508 / OCM 812 / Nankai-3) protein is Probable L-tyrosine/L-aspartate decarboxylase.